The following is a 250-amino-acid chain: Tripartite motif-containing protein 74 (250 aa).

An RING-type zinc finger spans residues 16–57; sequence CPICLEVFKESLMLQCGHSYCKGCLVSLSYHLDTKVRCPMCW. The segment at 84–125 adopts a B box-type zinc-finger fold; it reads PEPKVCVHHRNPLSLFCEKDQELICGLCGLLGSHQHHPVTPV. 4 residues coordinate Zn(2+): Cys89, His92, Cys111, and His117. Coiled-coil stretches lie at residues 125–169 and 204–235; these read VSTV…NESD and LVAS…FGNE.

This sequence belongs to the TRIM/RBCC family.

This Homo sapiens (Human) protein is Tripartite motif-containing protein 74 (TRIM74).